The sequence spans 445 residues: Asparagine--tRNA ligase (445 aa).

The protein belongs to the class-II aminoacyl-tRNA synthetase family. In terms of assembly, homodimer.

The protein localises to the cytoplasm. It carries out the reaction tRNA(Asn) + L-asparagine + ATP = L-asparaginyl-tRNA(Asn) + AMP + diphosphate + H(+). This Deinococcus deserti (strain DSM 17065 / CIP 109153 / LMG 22923 / VCD115) protein is Asparagine--tRNA ligase.